The primary structure comprises 67 residues: Large ribosomal subunit protein uL29 (67 aa).

The protein belongs to the universal ribosomal protein uL29 family.

This Magnetococcus marinus (strain ATCC BAA-1437 / JCM 17883 / MC-1) protein is Large ribosomal subunit protein uL29.